The primary structure comprises 487 residues: GTPase Der (487 aa).

2 EngA-type G domains span residues 5–169 and 178–351; these read PKLA…SREI and IKVA…ANSQ. GTP-binding positions include 11-18, 58-62, 121-124, 184-191, 231-235, and 296-299; these read GRPNVGKS, DTGGI, NKID, GRANVGKS, DTAGI, and NKWD. The region spanning 352-439 is the KH-like domain; sequence KRITTHQLNK…IHLKGKTKKD (88 aa). Residues 441 to 466 are disordered; sequence PVSSLSLTRKQTKSTDQENNEYDELY.

This sequence belongs to the TRAFAC class TrmE-Era-EngA-EngB-Septin-like GTPase superfamily. EngA (Der) GTPase family. Associates with the 50S ribosomal subunit.

Its function is as follows. GTPase that plays an essential role in the late steps of ribosome biogenesis. The chain is GTPase Der from Protochlamydia amoebophila (strain UWE25).